The chain runs to 383 residues: MLYALLLLFGGVSTVSSLRVAVVGEGVIGLSTATAILDLAEKRNIPAPEIHIFHHKPFEKILSRHIAGLFRIDSGSEIDRKYGYDTFEKLATLWREYGGLSGVQLVSGHILSDSKTKLDSQRESYGSLVYNYRDLAEPELFGPTSLFDLPRNTTTRGIHYTAYTSEGLRFCPFLKKELMTKGVRFTQRRIGNLEELGAEFDVVVNSAGLLGGVLAGDDAGNMKPIRGVLIRVDAPWQKHFLYRDFSTITIPVIDHVYMGTVKQEGAFGPNNVTSADIQDITSRYVALQPSFKRVHMLSSFVGYRPGRKQVRVEKQIRETNGSKKFTVVHNYGHSGNGFTLGYGSAVHAAHIVLDLPLDAYHGLVPEPLPINATISEWVKYLDD.

The first 17 residues, 1–17 (MLYALLLLFGGVSTVSS), serve as a signal peptide directing secretion. Lysine 56 and serine 63 together coordinate FAD. Asparagine 152, asparagine 271, and asparagine 320 each carry an N-linked (GlcNAc...) asparagine glycan. Threonine 339 contacts FAD. An N-linked (GlcNAc...) asparagine glycan is attached at asparagine 371.

Belongs to the DAMOX/DASOX family. It depends on FAD as a cofactor. As to expression, in both sexes, present in coelomocytes (at protein level). Expressed in hypodermal cells and the proximal gonadal sheath cells in adult hermaphrodites (at protein level). Also expressed in probable head mesodermal cells and unidentified cells in the head, and vulval muscles in adult hermaphrodites. Expressed in the seminal vesicle, spicule and tail cells in adult males (at protein level).

The protein resides in the secreted. The enzyme catalyses D-aspartate + O2 + H2O = oxaloacetate + H2O2 + NH4(+). It carries out the reaction D-glutamate + O2 + H2O = H2O2 + 2-oxoglutarate + NH4(+). Functionally, selectively catalyzes the oxidative deamination of acidic amino acids. Plays a role in the egg-laying events and maturation processes of the reproductive organs. This Caenorhabditis elegans protein is D-aspartate oxidase 3 (ddo-3).